The sequence spans 187 residues: Large ribosomal subunit protein eL18A (187 aa).

Ser-16 and Ser-64 each carry phosphoserine. Residues Thr-87, Thr-89, and Thr-134 each carry the phosphothreonine modification. Phosphoserine is present on Ser-136. Thr-138 is subject to Phosphothreonine.

It belongs to the eukaryotic ribosomal protein eL18 family. In terms of assembly, component of the large ribosomal subunit (LSU). Mature yeast ribosomes consist of a small (40S) and a large (60S) subunit. The 40S small subunit contains 1 molecule of ribosomal RNA (18S rRNA) and at least 33 different proteins. The large 60S subunit contains 3 rRNA molecules (25S, 5.8S and 5S rRNA) and at least 46 different proteins. eL18 interacts with NAP1.

The protein resides in the cytoplasm. In terms of biological role, component of the ribosome, a large ribonucleoprotein complex responsible for the synthesis of proteins in the cell. The small ribosomal subunit (SSU) binds messenger RNAs (mRNAs) and translates the encoded message by selecting cognate aminoacyl-transfer RNA (tRNA) molecules. The large subunit (LSU) contains the ribosomal catalytic site termed the peptidyl transferase center (PTC), which catalyzes the formation of peptide bonds, thereby polymerizing the amino acids delivered by tRNAs into a polypeptide chain. The nascent polypeptides leave the ribosome through a tunnel in the LSU and interact with protein factors that function in enzymatic processing, targeting, and the membrane insertion of nascent chains at the exit of the ribosomal tunnel. This Schizosaccharomyces pombe (strain 972 / ATCC 24843) (Fission yeast) protein is Large ribosomal subunit protein eL18A (rpl1801).